A 449-amino-acid polypeptide reads, in one-letter code: tRNA-2-methylthio-N(6)-dimethylallyladenosine synthase (449 aa).

One can recognise an MTTase N-terminal domain in the interval 2–119 (KGLFIRTYGC…LPEMIARASR (118 aa)). Positions 11, 47, 82, 157, 161, and 164 each coordinate [4Fe-4S] cluster. Residues 143–378 (EADGPAAFVS…QALLREQQTE (236 aa)) enclose the Radical SAM core domain. Residues 381–443 (ASQIGKTLPV…LNSLTGELVR (63 aa)) enclose the TRAM domain.

Belongs to the methylthiotransferase family. MiaB subfamily. In terms of assembly, monomer. It depends on [4Fe-4S] cluster as a cofactor.

It is found in the cytoplasm. It catalyses the reaction N(6)-dimethylallyladenosine(37) in tRNA + (sulfur carrier)-SH + AH2 + 2 S-adenosyl-L-methionine = 2-methylsulfanyl-N(6)-dimethylallyladenosine(37) in tRNA + (sulfur carrier)-H + 5'-deoxyadenosine + L-methionine + A + S-adenosyl-L-homocysteine + 2 H(+). Catalyzes the methylthiolation of N6-(dimethylallyl)adenosine (i(6)A), leading to the formation of 2-methylthio-N6-(dimethylallyl)adenosine (ms(2)i(6)A) at position 37 in tRNAs that read codons beginning with uridine. The sequence is that of tRNA-2-methylthio-N(6)-dimethylallyladenosine synthase from Hyphomonas neptunium (strain ATCC 15444).